We begin with the raw amino-acid sequence, 116 residues long: Ferredoxin-thioredoxin reductase, catalytic chain (116 aa).

Cysteine 57 serves as a coordination point for [4Fe-4S] cluster. The active-site Nucleophile is the cysteine 59. An intrachain disulfide couples cysteine 59 to cysteine 89. [4Fe-4S] cluster-binding residues include cysteine 76, cysteine 78, and cysteine 87.

This sequence belongs to the ferredoxin thioredoxin reductase beta subunit family. In terms of assembly, heterodimer of subunit A (variable subunit) and subunit B (catalytic subunit). Heterodimeric FTR forms a complex with ferredoxin and thioredoxin. [4Fe-4S] cluster is required as a cofactor.

The protein resides in the plastid. It localises to the chloroplast. It carries out the reaction [thioredoxin]-disulfide + 2 reduced [2Fe-2S]-[ferredoxin] + 2 H(+) = [thioredoxin]-dithiol + 2 oxidized [2Fe-2S]-[ferredoxin]. Its function is as follows. Catalytic subunit of the ferredoxin-thioredoxin reductase (FTR), which catalyzes the two-electron reduction of thioredoxins by the electrons provided by reduced ferredoxin. The protein is Ferredoxin-thioredoxin reductase, catalytic chain (ftrB) of Pyropia yezoensis (Susabi-nori).